The following is a 429-amino-acid chain: [LysW]-aminoadipate semialdehyde transaminase (429 aa).

Pyridoxal 5'-phosphate contacts are provided by residues 112–113 (GT) and phenylalanine 139. Residue arginine 142 coordinates substrate. 226–229 (DEIQ) contributes to the pyridoxal 5'-phosphate binding site. Lysine 255 bears the N6-(pyridoxal phosphate)lysine mark. Threonine 283 provides a ligand contact to substrate. Threonine 284 contacts pyridoxal 5'-phosphate. The disordered stretch occupies residues 408–429 (LRAQQSEMGQQQVSQGESVQTE). Residues 411-429 (QQSEMGQQQVSQGESVQTE) are compositionally biased toward low complexity.

It belongs to the class-III pyridoxal-phosphate-dependent aminotransferase family. LysJ subfamily. In terms of assembly, homodimer. It depends on pyridoxal 5'-phosphate as a cofactor.

It is found in the cytoplasm. The catalysed reaction is [amino-group carrier protein]-C-terminal-gamma-(L-lysyl)-L-glutamate + 2-oxoglutarate = [amino-group carrier protein]-C-terminal-N-(1-carboxy-5-oxopentan-1-yl)-L-glutamine + L-glutamate. It participates in amino-acid biosynthesis; L-lysine biosynthesis via AAA pathway; L-lysine from L-alpha-aminoadipate (Thermus route): step 4/5. Catalyzes the transfer of the amino group of L-glutamate to [LysW]-aminoadipate 6-semialdehyde, generating [LysW]-gamma-L-lysine. The polypeptide is [LysW]-aminoadipate semialdehyde transaminase (Deinococcus radiodurans (strain ATCC 13939 / DSM 20539 / JCM 16871 / CCUG 27074 / LMG 4051 / NBRC 15346 / NCIMB 9279 / VKM B-1422 / R1)).